The sequence spans 716 residues: Polyribonucleotide nucleotidyltransferase (716 aa).

Mg(2+)-binding residues include Asp486 and Asp492. Residues 553–612 (PHIYNIKINPEKIKDVIGKGGAVIRALSDETDTKIDISDDGNITIAALSQKSAAFAQQRI) form the KH domain. In terms of domain architecture, S1 motif spans 622-690 (GRIYQGTVTR…RQGRIRLSIK (69 aa)).

Belongs to the polyribonucleotide nucleotidyltransferase family. As to quaternary structure, component of the RNA degradosome, which is a multiprotein complex involved in RNA processing and mRNA degradation. Requires Mg(2+) as cofactor.

The protein localises to the cytoplasm. The catalysed reaction is RNA(n+1) + phosphate = RNA(n) + a ribonucleoside 5'-diphosphate. Involved in mRNA degradation. Catalyzes the phosphorolysis of single-stranded polyribonucleotides processively in the 3'- to 5'-direction. This is Polyribonucleotide nucleotidyltransferase from Hamiltonella defensa subsp. Acyrthosiphon pisum (strain 5AT).